The following is a 379-amino-acid chain: MADENGSLREAGAGGKTRAQAVVTIPSSAYFLKQVEEEEEVEALKVEVAAASDTESDTSSDDLSCGKADIDPSLLERVDEEKCRSIRKQYRQLIYTVQQNRDDIVNTASDSLTEALEEANVLFDAVSRTREAALDSQFLVLASDLGKEKAKHLNSDMNFFNQVAFCDFLFIFVGLNWMEDDERDPLNNCDDNIALSFWETVQKEATSCISQAETFHFLFGSFKPESAARKPRRNHRRKVQKMEENGVMPTKLRKLDLSGNQEATEKEVERILGLLQTYFRKYPDTPVSYFEFVIDPNSFSRTVENIFYVSFIIRDGFARIRLDQDRLPILEPININLAGEGNDPSFHSRKQGVISLSLQDWKNIVAAFEISEAMITNSY.

Residues 32-58 (LKQVEEEEEVEALKVEVAAASDTESDT) adopt a coiled-coil conformation.

It belongs to the NSE4 family. As to quaternary structure, component of the SMC5-SMC6 complex which consists at least of SMC5, SMC6, NSMCE2, NSMCE1, NSMCE4A or EID3 and NSMCE3. NSMCE1, NSMCE4A or EID3 and NSMCE3 probably form a subcomplex that bridges the head domains of the SMC5:SMC6 heterodimer. Homodimer, and heterodimer with EID2. Interacts with the C-terminal region of CREBBP.

Its subcellular location is the nucleus. The protein resides in the cytoplasm. It localises to the chromosome. It is found in the telomere. Functionally, tissue-specific component of the SMC5-SMC6 complex, a complex involved in repair of DNA double-strand breaks by homologous recombination. The complex may promote sister chromatid homologous recombination by recruiting the SMC1-SMC3 cohesin complex to double-strand breaks. The complex is required for telomere maintenance via recombination and mediates sumoylation of shelterin complex (telosome) components. In terms of biological role, acts as a repressor of nuclear receptor-dependent transcription possibly by interfering with CREBBP-dependent coactivation. May function as a coinhibitor of other CREBBP/EP300-dependent transcription factors. The chain is EP300-interacting inhibitor of differentiation 3 from Bos taurus (Bovine).